The primary structure comprises 456 residues: Tyrosine phenol-lyase (456 aa).

Lys-257 carries the N6-(pyridoxal phosphate)lysine modification.

The protein belongs to the beta-eliminating lyase family. In terms of assembly, homotetramer. Pyridoxal 5'-phosphate serves as cofactor.

The enzyme catalyses L-tyrosine + H2O = phenol + pyruvate + NH4(+). The protein is Tyrosine phenol-lyase (tpl) of Citrobacter freundii.